Reading from the N-terminus, the 439-residue chain is UDP-N-acetylmuramoylalanine--D-glutamate ligase (439 aa).

An ATP-binding site is contributed by 112–118 (GSNGKST).

It belongs to the MurCDEF family.

It localises to the cytoplasm. It carries out the reaction UDP-N-acetyl-alpha-D-muramoyl-L-alanine + D-glutamate + ATP = UDP-N-acetyl-alpha-D-muramoyl-L-alanyl-D-glutamate + ADP + phosphate + H(+). Its pathway is cell wall biogenesis; peptidoglycan biosynthesis. In terms of biological role, cell wall formation. Catalyzes the addition of glutamate to the nucleotide precursor UDP-N-acetylmuramoyl-L-alanine (UMA). This is UDP-N-acetylmuramoylalanine--D-glutamate ligase from Mannheimia succiniciproducens (strain KCTC 0769BP / MBEL55E).